We begin with the raw amino-acid sequence, 335 residues long: Syntaxin-18 (335 aa).

Topologically, residues 1–309 (MAVDITLLFR…EDIREAIKNN (309 aa)) are cytoplasmic. Composition is skewed to basic and acidic residues over residues 168–182 (KLEP…ESTS) and 192–208 (KDSE…EKIL). Residues 168 to 226 (KLEPEPNTKTRESTSSEKVSQSPSKDSEENPATEERPEKILAETQPELGTWGDGKGEDE) are disordered. The t-SNARE coiled-coil homology domain maps to 243–305 (IGEMNSLFDE…KEGNEDIREA (63 aa)). The chain crosses the membrane as a helical; Anchor for type IV membrane protein span at residues 310 to 330 (AGFRVWILFFLVMCSFSLLFL). Residues 331–335 (DWYDS) are Vesicular-facing.

It belongs to the syntaxin family. As to quaternary structure, component of a SNARE complex consisting of STX18, USE1L, BNIP1/SEC20L, and SEC22B. RINT1/TIP20L and ZW10 are associated with the complex through interaction with BNIP1/SEC20L. Interacts directly with USE1L and BNIP1/SEC20L. Ubiquitous.

It localises to the endoplasmic reticulum membrane. The protein resides in the golgi apparatus membrane. Its function is as follows. Syntaxin that may be involved in targeting and fusion of Golgi-derived retrograde transport vesicles with the ER. In Homo sapiens (Human), this protein is Syntaxin-18 (STX18).